The primary structure comprises 124 residues: Fluoride-specific ion channel FluC (124 aa).

A run of 4 helical transmembrane segments spans residues 2–22 (LNIA…RWLI), 35–55 (TGTL…IAWF), 71–91 (TGFC…VALF), and 100–120 (LGTM…AFWL). The Na(+) site is built by Gly75 and Thr78.

This sequence belongs to the fluoride channel Fluc/FEX (TC 1.A.43) family.

Its subcellular location is the cell inner membrane. The catalysed reaction is fluoride(in) = fluoride(out). Its activity is regulated as follows. Na(+) is not transported, but it plays an essential structural role and its presence is essential for fluoride channel function. Its function is as follows. Fluoride-specific ion channel. Important for reducing fluoride concentration in the cell, thus reducing its toxicity. The sequence is that of Fluoride-specific ion channel FluC from Proteus mirabilis (strain HI4320).